The sequence spans 296 residues: uncharacterized protein (296 aa).

CBS domains lie at 176–232 (GIKE…DKKV) and 236–292 (MRRD…KFPE).

This is an uncharacterized protein from Methanocaldococcus jannaschii (strain ATCC 43067 / DSM 2661 / JAL-1 / JCM 10045 / NBRC 100440) (Methanococcus jannaschii).